We begin with the raw amino-acid sequence, 503 residues long: E3 ubiquitin-protein ligase ariadne-1 (503 aa).

Over residues Met1–Asp11 the composition is skewed to acidic residues. The tract at residues Met1–Arg40 is disordered. Residues Asn12–Gly21 are compositionally biased toward low complexity. Residues Gln129–Asp340 form a TRIAD supradomain region. Residues Cys133, Cys136, Cys150, His152, Cys155, Cys158, Cys178, Cys183, Cys223, Cys228, Cys244, Cys246, Cys251, Cys254, His259, Cys264, Cys291, and Cys294 each contribute to the Zn(2+) site. The RING-type 1 zinc-finger motif lies at Cys133–Cys183. The interval Cys133–Val201 is important for interaction with Ubc10. The IBR-type zinc finger occupies Val203–Cys264. The RING-type 2; atypical zinc finger occupies Cys291–Cys322. Residue Cys304 is part of the active site. Residues Cys309, Cys314, Cys319, Cys322, His329, and Cys336 each coordinate Zn(2+). Residues Glu341–Tyr361 adopt a coiled-coil conformation.

This sequence belongs to the RBR family. Ariadne subfamily. Can form homodimers. Interacts (via RING-type 1 zinc finger) with Ubc10. Interacts with the LINC complex member koi. Interacts with park. Interacts with ari-2. Specifically interacts with isoform ECR-A of EcR. Post-translationally, autophosphorylated. As to expression, widely expressed, with prominent levels in the nervous system and female gonads.

It is found in the cytoplasm. Its subcellular location is the nucleus. The catalysed reaction is [E2 ubiquitin-conjugating enzyme]-S-ubiquitinyl-L-cysteine + [acceptor protein]-L-lysine = [E2 ubiquitin-conjugating enzyme]-L-cysteine + [acceptor protein]-N(6)-ubiquitinyl-L-lysine.. Atypical E3 ubiquitin-protein ligase, which catalyzes ubiquitination of target proteins together with ubiquitin-conjugating enzyme E2 Ubc10. Controls the subcellular localization and morphology of muscle nuclei (myonuclei) by regulating the protein levels and distribution of the LINC (LInker of Nucleoskeleton and Cytoskeleton) complex. Functions by mediating the monoubiquitination of the LINC complex subunit koi leading to its subsequent proteasomal degradation. Appears to function, at least partially redundantly, with the RBR E3 ligase family member park in nuclear localization and morphology. Likely to function in metamorphosis by regulating the proteins levels of EcR isoform A (ECR-A) and its heterodimeric partner usp, via the ubiquitination and subsequent degradation of ECR-A. This chain is E3 ubiquitin-protein ligase ariadne-1, found in Drosophila melanogaster (Fruit fly).